The following is a 692-amino-acid chain: Serine/threonine-protein kinase Nek8 (692 aa).

Residues 4-258 (YERIRVVGRG…LSHIMAQPLC (255 aa)) enclose the Protein kinase domain. ATP contacts are provided by residues 10 to 18 (VGRGAFGIV) and lysine 33. Aspartate 128 (proton acceptor) is an active-site residue. At threonine 162 the chain carries Phosphothreonine; by autocatalysis. The interval 277–301 (AEKSVAPSNTGSRTTSVRCRGIPRG) is disordered. Residues 282–293 (APSNTGSRTTSV) are compositionally biased toward polar residues. 5 RCC1 repeats span residues 312-350 (SSVY…VTRS), 410-461 (GIIM…LSTE), 462-513 (RELF…LTVP), 580-631 (GDCY…IGAE), and 632-684 (SEVY…AVRS).

It belongs to the protein kinase superfamily. NEK Ser/Thr protein kinase family. NIMA subfamily. As to quaternary structure, interacts with PKD2; may regulate PKD2 targeting to the cilium. Interacts with ANKS6. Component of a complex containing at least ANKS6, INVS, NEK8 and NPHP3. ANKS6 may organize complex assembly by linking INVS and NPHP3 to NEK8 and INVS may target the complex to the proximal ciliary axoneme. Interacts with ANKS3. It depends on Mg(2+) as a cofactor. In terms of tissue distribution, highest expression in thyroid, adrenal gland and skin. Low levels in spleen, colon and uterus. Overexpressed in breast tumors, with highest expression in infiltrating ductal carcinomas and moderate levels in mucinous adenocarcinoma.

Its subcellular location is the cytoplasm. It is found in the cytoskeleton. The protein resides in the cell projection. The protein localises to the cilium. It localises to the microtubule organizing center. Its subcellular location is the centrosome. It is found in the cilium axoneme. It catalyses the reaction L-seryl-[protein] + ATP = O-phospho-L-seryl-[protein] + ADP + H(+). The catalysed reaction is L-threonyl-[protein] + ATP = O-phospho-L-threonyl-[protein] + ADP + H(+). Functionally, required for renal tubular integrity. May regulate local cytoskeletal structure in kidney tubule epithelial cells. May regulate ciliary biogenesis through targeting of proteins to the cilia. Plays a role in organogenesis, and is involved in the regulation of the Hippo signaling pathway. The protein is Serine/threonine-protein kinase Nek8 (NEK8) of Homo sapiens (Human).